Consider the following 333-residue polypeptide: 4-hydroxy-2-oxovalerate aldolase (333 aa).

The 251-residue stretch at 3-253 folds into the Pyruvate carboxyltransferase domain; it reads ILINDSTLRD…NTGIDLYHFL (251 aa). 11-12 contributes to the substrate binding site; the sequence is RD. Mn(2+) is bound at residue Asp-12. His-15 (proton acceptor) is an active-site residue. Residues Ser-165 and His-192 each coordinate substrate. Positions 192 and 194 each coordinate Mn(2+).

It belongs to the 4-hydroxy-2-oxovalerate aldolase family. As to quaternary structure, interacts with MhpF.

It carries out the reaction (S)-4-hydroxy-2-oxopentanoate = acetaldehyde + pyruvate. It participates in aromatic compound metabolism; 3-phenylpropanoate degradation. Functionally, catalyzes the retro-aldol cleavage of 4-hydroxy-2-oxopentanoate to pyruvate and acetaldehyde. Is involved in the meta-cleavage pathway for the degradation of aromatic compounds. The chain is 4-hydroxy-2-oxovalerate aldolase from Serratia proteamaculans (strain 568).